The primary structure comprises 594 residues: Cationic amino acid transporter 1 (594 aa).

An N-acetylalanine modification is found at Ala2. The Cytoplasmic portion of the chain corresponds to 2-78 (ASGGGDDGLR…EMKKTLTWWD (77 aa)). The chain crosses the membrane as a helical span at residues 79–99 (LMWFGIGAVIGSGIFVLTGLE). Residues 100 to 104 (ARNHS) are Extracellular-facing. The N-linked (GlcNAc...) asparagine glycan is linked to Asn102. A helical transmembrane segment spans residues 105–125 (GPAVVLSYVVSGVSAMLSVFC). Residues 126 to 149 (YTEFAVEIPVAGGSFAYLRVELGD) are Cytoplasmic-facing. The chain crosses the membrane as a helical span at residues 150 to 170 (FMAFIAAGNIILEYVVGGAAV). Residues 171–201 (ARSWTSYFATLLNHKPEDFRIIVHKLGEDYS) are Extracellular-facing. The helical transmembrane segment at 202 to 222 (HLDPIAVGVCAIICVLAVVGT) threads the bilayer. At 223-227 (KGSSR) the chain is on the cytoplasmic side. The helical transmembrane segment at 228–248 (FNYIASIIHMVVILFVIIAGF) threads the bilayer. The Extracellular portion of the chain corresponds to 249–266 (TKADVKNYSDFTPYGVRG). Residue Asn255 is glycosylated (N-linked (GlcNAc...) asparagine). The helical transmembrane segment at 267-287 (VFKSAAVLFFAYIGFDAVSTM) threads the bilayer. The Cytoplasmic portion of the chain corresponds to 288 to 297 (AEETKNPGRD). A helical transmembrane segment spans residues 298 to 318 (IPIGLVGSMVVTTVCYCLMAV). Residues 319–348 (TLCLMQPYQQIDPDAPFSVAFSAVGWDWAK) are Extracellular-facing. A helical transmembrane segment spans residues 349 to 369 (YIVAFGALKGMTTVLLVGAIG). Topologically, residues 370–393 (QARYMTHIARAHMMPPWLAQVNAK) are cytoplasmic. A helical membrane pass occupies residues 394 to 414 (TGTPINATVVMLAATALIAFF). Residues 415 to 418 (TKLK) lie on the Extracellular side of the membrane. Residues 419-439 (ILADLLSVSTLFIFMFVAVAL) form a helical membrane-spanning segment. Over 440 to 457 (LVRRYYVTGETSTRDRNK) the chain is Cytoplasmic. A helical membrane pass occupies residues 458–478 (FLVFLGLILASSTATAVYWAL). The Extracellular portion of the chain corresponds to 479 to 483 (EEEGW). The chain crosses the membrane as a helical span at residues 484 to 504 (IGYCITVPIWFLSTVAMKFLV). Over 505 to 511 (PQARAPK) the chain is Cytoplasmic. A helical transmembrane segment spans residues 512 to 532 (IWGVPLVPWLPSASIAINIFL). Residues 533 to 543 (LGSIDTKSFVR) lie on the Extracellular side of the membrane. Residues 544–564 (FAIWTGILLIYYVLFGLHATY) form a helical membrane-spanning segment. Over 565-594 (DTAKATLKEKQALQKAEEGGVVADNSCSAT) the chain is Cytoplasmic.

It belongs to the amino acid-polyamine-organocation (APC) superfamily. Cationic amino acid transporter (CAT) (TC 2.A.3.3) family. As to expression, expressed in roots, stems, flowers, petioles, seeds, siliques, and leaves. Mostly present in major veins.

Its subcellular location is the membrane. With respect to regulation, inhibited by the protonophore 2,4-dinitrophenol. High-affinity permease involved in the transport of the cationic amino acids (e.g. arginine, lysine, histidine, citrulline, valine, and glutamate). Transport mostly basic amino acids, and, to a lower extent neutral and acidic amino acids. May function as a proton symporter. This Arabidopsis thaliana (Mouse-ear cress) protein is Cationic amino acid transporter 1 (CAT1).